The chain runs to 471 residues: Citrate synthase, mitochondrial (471 aa).

Active-site residues include histidine 309, histidine 355, and aspartate 409.

The protein belongs to the citrate synthase family. Homodimer. Ubiquitous.

The protein resides in the mitochondrion matrix. The catalysed reaction is oxaloacetate + acetyl-CoA + H2O = citrate + CoA + H(+). The protein operates within carbohydrate metabolism; tricarboxylic acid cycle; isocitrate from oxaloacetate: step 1/2. The polypeptide is Citrate synthase, mitochondrial (Solanum tuberosum (Potato)).